Here is a 493-residue protein sequence, read N- to C-terminus: Lysine--tRNA ligase (493 aa).

Mg(2+) is bound by residues Glu403 and Glu410.

The protein belongs to the class-II aminoacyl-tRNA synthetase family. Homodimer. Mg(2+) is required as a cofactor.

It localises to the cytoplasm. It catalyses the reaction tRNA(Lys) + L-lysine + ATP = L-lysyl-tRNA(Lys) + AMP + diphosphate. The sequence is that of Lysine--tRNA ligase from Wigglesworthia glossinidia brevipalpis.